Reading from the N-terminus, the 125-residue chain is Large ribosomal subunit protein bL12 (125 aa).

It belongs to the bacterial ribosomal protein bL12 family. In terms of assembly, homodimer. Part of the ribosomal stalk of the 50S ribosomal subunit. Forms a multimeric L10(L12)X complex, where L10 forms an elongated spine to which 2 to 4 L12 dimers bind in a sequential fashion. Binds GTP-bound translation factors.

Its function is as follows. Forms part of the ribosomal stalk which helps the ribosome interact with GTP-bound translation factors. Is thus essential for accurate translation. The polypeptide is Large ribosomal subunit protein bL12 (Campylobacter jejuni (strain RM1221)).